Consider the following 1079-residue polypeptide: Integrator complex subunit 3 homolog (1079 aa).

Disordered stretches follow at residues 539 to 574, 925 to 949, and 1010 to 1079; these read ESSERETEAVFSDDDGENIARCNKNDENTDDDDDLP, YPSSSPNKRKRPSKGSSAASSTPSA, and AVGR…NDSD. Over residues 938-949 the composition is skewed to low complexity; that stretch reads KGSSAASSTPSA. Serine 1049, serine 1050, serine 1054, and serine 1055 each carry phosphoserine. A compositionally biased stretch (basic residues) spans 1062 to 1073; it reads HKITQAAKKRKK.

The protein belongs to the Integrator subunit 3 family. As to quaternary structure, belongs to the multiprotein complex Integrator, at least composed of IntS1, IntS2, IntS3, IntS4, omd/IntS5, IntS6, defl/IntS7, IntS8, IntS9, IntS10, IntS11, IntS12, asun/IntS13, IntS14 and IntS15. The core complex associates with protein phosphatase 2A subunits mts/PP2A and Pp2A-29B, to form the Integrator-PP2A (INTAC) complex.

Its subcellular location is the nucleus. It localises to the cytoplasm. Component of the integrator complex, a multiprotein complex that terminates RNA polymerase II (Pol II) transcription in the promoter-proximal region of genes. The integrator complex provides a quality checkpoint during transcription elongation by driving premature transcription termination of transcripts that are unfavorably configured for transcriptional elongation: the complex terminates transcription by (1) catalyzing dephosphorylation of the C-terminal domain (CTD) of Pol II subunit Polr2A/Rbp1 and Spt5, and (2) degrading the exiting nascent RNA transcript via endonuclease activity. The integrator complex is also involved in the 3'-end processing of the U7 snRNA, and also the spliceosomal snRNAs U1, U2, U4 and U5. The chain is Integrator complex subunit 3 homolog (IntS3) from Drosophila virilis (Fruit fly).